A 583-amino-acid chain; its full sequence is 5-aminolevulinate synthase, erythroid-specific, mitochondrial (583 aa).

Position 158 (R158) interacts with succinyl-CoA. Pyridoxal 5'-phosphate-binding residues include C253 and F254. Succinyl-CoA is bound by residues S275 and R294. 3 residues coordinate pyridoxal 5'-phosphate: S327, H355, and T383. K386 is an active-site residue. K386 bears the N6-(pyridoxal phosphate)lysine mark. Pyridoxal 5'-phosphate-binding residues include T415 and T416. T503 serves as a coordination point for succinyl-CoA.

It belongs to the class-II pyridoxal-phosphate-dependent aminotransferase family. In terms of assembly, homodimer. It depends on pyridoxal 5'-phosphate as a cofactor.

Its subcellular location is the mitochondrion inner membrane. It catalyses the reaction succinyl-CoA + glycine + H(+) = 5-aminolevulinate + CO2 + CoA. The protein operates within porphyrin-containing compound metabolism; protoporphyrin-IX biosynthesis; 5-aminolevulinate from glycine: step 1/1. Catalyzes the pyridoxal 5'-phosphate (PLP)-dependent condensation of succinyl-CoA and glycine to form aminolevulinic acid (ALA), with CoA and CO2 as by-products. Contributes significantly to heme formation during erythropoiesis. The protein is 5-aminolevulinate synthase, erythroid-specific, mitochondrial (alas2) of Danio rerio (Zebrafish).